The chain runs to 125 residues: Actin, alpha skeletal muscle (125 aa).

It belongs to the actin family. In terms of assembly, polymerization of globular actin (G-actin) leads to a structural filament (F-actin) in the form of a two-stranded helix. Each actin can bind to 4 others. In terms of processing, methylated at His-75 by SETD3.

It localises to the cytoplasm. The protein localises to the cytoskeleton. Its function is as follows. Actins are highly conserved proteins that are involved in various types of cell motility and are ubiquitously expressed in all eukaryotic cells. The polypeptide is Actin, alpha skeletal muscle (Pleurodeles waltl (Iberian ribbed newt)).